We begin with the raw amino-acid sequence, 370 residues long: Chaperone protein DnaJ (370 aa).

Residues 7 to 73 form the J domain; the sequence is DYYEILGVPR…QKRAMYDRFG (67 aa). The segment at 144-226 adopts a CR-type zinc-finger fold; sequence GTEIPIEYER…CGGSGRVLRR (83 aa). Residues cysteine 157, cysteine 160, cysteine 174, cysteine 177, cysteine 200, cysteine 203, cysteine 214, and cysteine 217 each contribute to the Zn(2+) site. CXXCXGXG motif repeat units lie at residues 157 to 164, 174 to 181, 200 to 207, and 214 to 221; these read CPRCGGTG, CDECGGTG, and CHECGGSG.

Belongs to the DnaJ family. As to quaternary structure, homodimer. Requires Zn(2+) as cofactor.

Its subcellular location is the cytoplasm. Participates actively in the response to hyperosmotic and heat shock by preventing the aggregation of stress-denatured proteins and by disaggregating proteins, also in an autonomous, DnaK-independent fashion. Unfolded proteins bind initially to DnaJ; upon interaction with the DnaJ-bound protein, DnaK hydrolyzes its bound ATP, resulting in the formation of a stable complex. GrpE releases ADP from DnaK; ATP binding to DnaK triggers the release of the substrate protein, thus completing the reaction cycle. Several rounds of ATP-dependent interactions between DnaJ, DnaK and GrpE are required for fully efficient folding. Also involved, together with DnaK and GrpE, in the DNA replication of plasmids through activation of initiation proteins. This Thermotoga neapolitana (strain ATCC 49049 / DSM 4359 / NBRC 107923 / NS-E) protein is Chaperone protein DnaJ.